The following is a 1551-amino-acid chain: Envelopment polyprotein (1551 aa).

Positions 1–17 (MSKRVLIIAVVVYLVFT) are cleaved as a signal peptide. Residues 18-546 (TQNQITGNHT…CRMSSRPTVA (529 aa)) are Lumenal-facing. Residues 24-66 (GNHTTINSSSPSTTEASSTPTVSRTPQTTTTSTAVSTTITATT) form a disordered region. N-linked (GlcNAc...) asparagine; by host glycans are attached at residues Asn25 and Asn30. The segment covering 31–66 (SSSPSTTEASSTPTVSRTPQTTTTSTAVSTTITATT) has biased composition (low complexity). 3 N-linked (GlcNAc...) asparagine; by host glycosylation sites follow: Asn80, Asn142, and Asn413. Residues 547 to 567 (LLLGIWIGCGYILTCIFSFLL) form a helical membrane-spanning segment. Residues 568 to 675 (YHLILFFANC…ISVGIFLKRT (108 aa)) lie on the Cytoplasmic side of the membrane. A helical membrane pass occupies residues 676-696 (TWLVVLLVLLGLAISPVQGAP). At 697–704 (TEVSNVKQ) the chain is on the lumenal side. Residues 705–725 (DGDYSICYFIFGCLVTAALLL) form a helical membrane-spanning segment. The Cytoplasmic segment spans residues 726–823 (KVKRTNSNGI…REKLFTTGLQ (98 aa)). A helical transmembrane segment spans residues 824–844 (LFINKTNVVVFALIMCFLLLL). The Lumenal segment spans residues 845-1451 (TGHNASAFDS…GDFFKHYIGS (607 aa)). Residues Asn848, Asn1201, Asn1258, and Asn1420 are each glycosylated (N-linked (GlcNAc...) asparagine; by host). Cys1023 and Cys1216 are disulfide-bonded. Residues 1452-1472 (IAVGVLGTVLPFALLILFFIY) traverse the membrane as a helical segment. Residues 1473–1551 (GDKMLWPFKV…KKEKKLSEIA (79 aa)) are Cytoplasmic-facing.

Belongs to the nairovirus envelope glycoprotein family. In terms of assembly, heterodimer with glycoprotein C; in prefusion state. As to quaternary structure, heterodimer with glycoprotein N; in prefusion state. Homotrimeric; in postfusion state. In terms of processing, specific enzymatic cleavage by host MBTPS1/S1P/SKI-1 endopeptidase yield glycoprotein N. Specific enzymatic cleavages by host furin-like protease and MBTPS1/S1P endopeptidase yield GP38. Post-translationally, glycosylated.

Its subcellular location is the host endoplasmic reticulum membrane. It is found in the virion membrane. The protein resides in the host Golgi apparatus membrane. Glycoprotein N and glycoprotein C interact with each other and are present at the surface of the virion. Glycoprotein N probably locks the Gn-Gc complex in a prefusion state. Glycoprotein N and glycoprotein C are able to attach the virion to host cell receptors. This attachment induces virion internalization predominantly through clathrin-dependent endocytosis. In terms of biological role, glycoprotein C and glycoprotein N interact with each other and are present at the surface of the virion. The spikes at the surface of the virion are formed by an N-terminal extension of glycoprotein C. Glycoprotein N and glycoprotein C are able to attach the virion to host cell receptors. This attachment induces virion internalization predominantly through clathrin-dependent endocytosis. Class II fusion protein that promotes fusion of viral membrane with host endosomal membrane after endocytosis of the virion. Exposure to potassium is necessary for the conformational change leading to fusion. The chain is Envelopment polyprotein (GP) from Amblyomma variegatum (Tropical bont tick).